The following is a 440-amino-acid chain: UDP-N-acetylmuramoylalanine--D-glutamate ligase (440 aa).

128–134 (GTNGKTT) serves as a coordination point for ATP.

The protein belongs to the MurCDEF family.

The protein resides in the cytoplasm. It carries out the reaction UDP-N-acetyl-alpha-D-muramoyl-L-alanine + D-glutamate + ATP = UDP-N-acetyl-alpha-D-muramoyl-L-alanyl-D-glutamate + ADP + phosphate + H(+). The protein operates within cell wall biogenesis; peptidoglycan biosynthesis. Its function is as follows. Cell wall formation. Catalyzes the addition of glutamate to the nucleotide precursor UDP-N-acetylmuramoyl-L-alanine (UMA). This Lawsonia intracellularis (strain PHE/MN1-00) protein is UDP-N-acetylmuramoylalanine--D-glutamate ligase.